The following is a 62-amino-acid chain: Trypsin inhibitor MCI-3 (62 aa).

The protein belongs to the protease inhibitor I13 (potato type I serine protease inhibitor) family.

This chain is Trypsin inhibitor MCI-3, found in Momordica charantia (Bitter gourd).